A 148-amino-acid chain; its full sequence is Lysozyme C, non-stomach isozyme (148 aa).

Positions 1 to 18 (MKALLILGLLLFSVAVQG) are cleaved as a signal peptide. Residues 19–148 (KVFERCELAR…LTSYIQGCGV (130 aa)) enclose the C-type lysozyme domain. Cystine bridges form between Cys24–Cys146, Cys48–Cys134, Cys83–Cys99, and Cys95–Cys113. Catalysis depends on residues Glu53 and Asp71.

It belongs to the glycosyl hydrolase 22 family. In terms of tissue distribution, expressed in blood cells.

It carries out the reaction Hydrolysis of (1-&gt;4)-beta-linkages between N-acetylmuramic acid and N-acetyl-D-glucosamine residues in a peptidoglycan and between N-acetyl-D-glucosamine residues in chitodextrins.. Lysozymes have primarily a bacteriolytic function; those in tissues and body fluids are associated with the monocyte-macrophage system and enhance the activity of immunoagents. This Bos taurus (Bovine) protein is Lysozyme C, non-stomach isozyme (LYS).